We begin with the raw amino-acid sequence, 235 residues long: MKLIVGLGNPGAKYAANRHNVGFMAVERIAGDHGFSPWRARFQGEIAEGRLGETRVTLLKPATFMNLSGQSVGEAMRYLKLAPQDVIVLHDELDLAPGKVRLKTGGGHAGHNGLRSLHQHIGEGYRRLRIGIGHPGDKDRVAGYVLSDFAKAEQAGLDDLLRGISDGAAALAAGDDARFMNAVAARVAPARNSGTRPDNPGKGSPEKPAAKPANDPIAEPPSLSDRLRALTERFR.

Tyr-14 is a binding site for tRNA. The Proton acceptor role is filled by His-19. Positions 64, 66, and 112 each coordinate tRNA. Positions 188–235 (APARNSGTRPDNPGKGSPEKPAAKPANDPIAEPPSLSDRLRALTERFR) are disordered. Residues 225–235 (DRLRALTERFR) are compositionally biased toward basic and acidic residues.

This sequence belongs to the PTH family. In terms of assembly, monomer.

It is found in the cytoplasm. The enzyme catalyses an N-acyl-L-alpha-aminoacyl-tRNA + H2O = an N-acyl-L-amino acid + a tRNA + H(+). Functionally, hydrolyzes ribosome-free peptidyl-tRNAs (with 1 or more amino acids incorporated), which drop off the ribosome during protein synthesis, or as a result of ribosome stalling. In terms of biological role, catalyzes the release of premature peptidyl moieties from peptidyl-tRNA molecules trapped in stalled 50S ribosomal subunits, and thus maintains levels of free tRNAs and 50S ribosomes. The sequence is that of Peptidyl-tRNA hydrolase from Paracoccus denitrificans (strain Pd 1222).